The primary structure comprises 574 residues: Sulfate adenylyltransferase (574 aa).

An N-terminal region spans residues Met1–Tyr170. The tract at residues Asp171–Lys395 is catalytic. Gln198 contacts sulfate. ATP-binding positions include Gln198–Asn201 and Gly292–His295. Catalysis depends on residues Thr199, Arg200, and Asn201. Residue Arg200 coordinates sulfate. Ala296 is a sulfate binding site. Position 334 (Met334) interacts with ATP. The interval Gln396 to Ile574 is allosteric regulation domain; adenylyl-sulfate kinase-like. 3'-phosphoadenylyl sulfate-binding positions include Glu435–Arg438, Arg452, Ile478–Ala479, and Lys519.

In the N-terminal section; belongs to the sulfate adenylyltransferase family. It in the C-terminal section; belongs to the APS kinase family. Homohexamer. Dimer of trimers.

It localises to the cytoplasm. The enzyme catalyses sulfate + ATP + H(+) = adenosine 5'-phosphosulfate + diphosphate. It participates in sulfur metabolism; hydrogen sulfide biosynthesis; sulfite from sulfate: step 1/3. Its activity is regulated as follows. Allosterically inhibited by 3'-phosphoadenosine 5'-phosphosulfate (PAPS). Its function is as follows. Catalyzes the first intracellular reaction of sulfate assimilation, forming adenosine-5'-phosphosulfate (APS) from inorganic sulfate and ATP. Plays an important role in sulfate activation as a component of the biosynthesis pathway of sulfur-containing amino acids. This Mycosarcoma maydis (Corn smut fungus) protein is Sulfate adenylyltransferase.